Consider the following 545-residue polypeptide: 2-succinyl-5-enolpyruvyl-6-hydroxy-3-cyclohexene-1-carboxylate synthase (545 aa).

Residues 170–185 show a composition bias toward polar residues; the sequence is QVSGLQRSAPAPSSDS. The tract at residues 170–193 is disordered; it reads QVSGLQRSAPAPSSDSPLGAAPQL.

Belongs to the TPP enzyme family. MenD subfamily. In terms of assembly, homodimer. Mg(2+) serves as cofactor. It depends on Mn(2+) as a cofactor. The cofactor is thiamine diphosphate.

It catalyses the reaction isochorismate + 2-oxoglutarate + H(+) = 5-enolpyruvoyl-6-hydroxy-2-succinyl-cyclohex-3-ene-1-carboxylate + CO2. It participates in quinol/quinone metabolism; 1,4-dihydroxy-2-naphthoate biosynthesis; 1,4-dihydroxy-2-naphthoate from chorismate: step 2/7. It functions in the pathway cofactor biosynthesis; phylloquinone biosynthesis. In terms of biological role, catalyzes the thiamine diphosphate-dependent decarboxylation of 2-oxoglutarate and the subsequent addition of the resulting succinic semialdehyde-thiamine pyrophosphate anion to isochorismate to yield 2-succinyl-5-enolpyruvyl-6-hydroxy-3-cyclohexene-1-carboxylate (SEPHCHC). This is 2-succinyl-5-enolpyruvyl-6-hydroxy-3-cyclohexene-1-carboxylate synthase from Parasynechococcus marenigrum (strain WH8102).